A 476-amino-acid chain; its full sequence is Serine/threonine-protein kinase PknF (476 aa).

Phosphothreonine; by autocatalysis is present on residues T8 and T13. Residues 12 to 279 (FTIVRQLGSG…FARALGHRLG (268 aa)) enclose the Protein kinase domain. ATP contacts are provided by residues 18–26 (LGSGGMGEV) and K41. D137 (proton acceptor) is an active-site residue. A phosphothreonine; by autocatalysis mark is found at T173, T175, and T287. Residue S290 is modified to Phosphoserine; by autocatalysis. The disordered stretch occupies residues 332 to 376 (ADDERAAQPARTRTTTSAGTTTSVAPASTTRPAPTTPTTTGAADT). Positions 338–376 (AQPARTRTTTSAGTTTSVAPASTTRPAPTTPTTTGAADT) are enriched in low complexity.

This sequence belongs to the protein kinase superfamily. Ser/Thr protein kinase family. Dephosphorylated by PstP.

The catalysed reaction is L-seryl-[protein] + ATP = O-phospho-L-seryl-[protein] + ADP + H(+). The enzyme catalyses L-threonyl-[protein] + ATP = O-phospho-L-threonyl-[protein] + ADP + H(+). This chain is Serine/threonine-protein kinase PknF (pknF), found in Mycobacterium bovis (strain ATCC BAA-935 / AF2122/97).